Reading from the N-terminus, the 225-residue chain is UPF0758 protein SEQ_1136 (225 aa).

An MPN domain is found at 102–224 (PVLSSAQVAE…YYSFREKSDL (123 aa)). His-173, His-175, and Asp-186 together coordinate Zn(2+). A JAMM motif motif is present at residues 173–186 (HNHPSGLTKPSAND).

Belongs to the UPF0758 family.

The chain is UPF0758 protein SEQ_1136 from Streptococcus equi subsp. equi (strain 4047).